Here is a 200-residue protein sequence, read N- to C-terminus: Holliday junction branch migration complex subunit RuvA (200 aa).

Residues 1–63 are domain I; that stretch reads MIASVRGVVT…EDSLTLYGFA (63 aa). The domain II stretch occupies residues 64–142; it reads DDNAKALFEL…PVPVGGDGAA (79 aa). The flexible linker stretch occupies residues 143–151; it reads GVTTGAWPE. The tract at residues 151–200 is domain III; it reads EQVRQALVGLGWTAGQAEQAVAAVAETVDGEVPPVPVLLRQAIRLLGRTR.

The protein belongs to the RuvA family. Homotetramer. Forms an RuvA(8)-RuvB(12)-Holliday junction (HJ) complex. HJ DNA is sandwiched between 2 RuvA tetramers; dsDNA enters through RuvA and exits via RuvB. An RuvB hexamer assembles on each DNA strand where it exits the tetramer. Each RuvB hexamer is contacted by two RuvA subunits (via domain III) on 2 adjacent RuvB subunits; this complex drives branch migration. In the full resolvosome a probable DNA-RuvA(4)-RuvB(12)-RuvC(2) complex forms which resolves the HJ.

It localises to the cytoplasm. The RuvA-RuvB-RuvC complex processes Holliday junction (HJ) DNA during genetic recombination and DNA repair, while the RuvA-RuvB complex plays an important role in the rescue of blocked DNA replication forks via replication fork reversal (RFR). RuvA specifically binds to HJ cruciform DNA, conferring on it an open structure. The RuvB hexamer acts as an ATP-dependent pump, pulling dsDNA into and through the RuvAB complex. HJ branch migration allows RuvC to scan DNA until it finds its consensus sequence, where it cleaves and resolves the cruciform DNA. The polypeptide is Holliday junction branch migration complex subunit RuvA (Salinispora arenicola (strain CNS-205)).